Here is a 572-residue protein sequence, read N- to C-terminus: 3-ketosteroid oxygenase (572 aa).

2 helical membrane passes run 52-72 (AFALSHHIIMGIYLLILRNFL) and 84-104 (YFMRVFIVHIIYIIISYFIRI).

It belongs to the cytochrome P450 family. Expressed in the 2 embryonic head hypodermal cells XXXL/R.

The protein localises to the membrane. The catalysed reaction is 5alpha-cholest-7-en-3-one + 3 reduced [NADPH--hemoprotein reductase] + 3 O2 = (25S)-Delta7-dafachronate + 3 oxidized [NADPH--hemoprotein reductase] + 4 H2O + 4 H(+). It catalyses the reaction cholest-4-en-3-one + 3 reduced [NADPH--hemoprotein reductase] + 3 O2 = (25S)-3-oxocholest-4-en-26-oate + 3 oxidized [NADPH--hemoprotein reductase] + 4 H2O + 4 H(+). It functions in the pathway steroid hormone biosynthesis; dafachronic acid biosynthesis. In terms of biological role, converts the 3-keto steroids 4-cholesten-3-one and lathosterone into the carboxylic metabolites 3-keto-4-cholestenate (Delta(4)-dafachronic acid, Delta(4)-DA) and 3-keto-7,(5a)-cholestenate (Delta(7)-dafachronic acid, Delta(7)-DA) respectively, by catalyzing successive oxidations at C-26. Dafachronic acids bind directly to the nuclear hormone receptor (NHR) DAF-12, suppressing dauer formation and inducing reproductive growth. In a non-cell autonomous manner, negatively regulates body wall muscle arm extensions to motor neurons probably by preventing daf-12 isoform b activation. May be involved in thermotolerance. The polypeptide is 3-ketosteroid oxygenase (daf-9) (Caenorhabditis elegans).